We begin with the raw amino-acid sequence, 271 residues long: MAGLEVLFASAAPAMTCPQDALVCFLHWEVVTNGYYGLGTGDQPDPNDKKSELLPAEWNSNKELYALRYESKDGARKLLLKAVSVENGMIINVLEHGTQQVADLTLNLDDYIDAEDLSDFHRTYKNSEELRSRIRSGIITPIHEQWEKVRLSSPPREFPPATAREVDPLRISSHHPHTSRQPTWRDPLSPFAVGGEDLDPFGCQRGGMIVDPLRSGFPRALIDPSSGLPNRLPPGAVPPGARFDPFGPIGTSPSGPNPDHLPPPGYDDMYL.

At alanine 2 the chain carries N-acetylalanine. Positions 2–150 (AGLEVLFASA…PIHEQWEKVR (149 aa)) are important for homodimerization and interaction with FBXO7. A phosphoserine mark is found at serine 153 and serine 189. Arginine 205 bears the Omega-N-methylarginine mark. Arginine 219 is subject to Asymmetric dimethylarginine. Residues 221–271 (LIDPSSGLPNRLPPGAVPPGARFDPFGPIGTSPSGPNPDHLPPPGYDDMYL) are disordered. Omega-N-methylarginine is present on arginine 231. Residue serine 252 is modified to Phosphoserine. Pro residues predominate over residues 255-265 (GPNPDHLPPPG).

It belongs to the proteasome inhibitor PI31 family. As to quaternary structure, monomer and homodimer. Interacts with FBXO7.

It is found in the cytoplasm. The protein localises to the endoplasmic reticulum. Functionally, plays an important role in control of proteasome function. Inhibits the hydrolysis of protein and peptide substrates by the 20S proteasome. Also inhibits the activation of the proteasome by the proteasome regulatory proteins PA700 and PA28. The polypeptide is Proteasome inhibitor PI31 subunit (Psmf1) (Rattus norvegicus (Rat)).